A 554-amino-acid polypeptide reads, in one-letter code: Glucose-6-phosphate isomerase (554 aa).

The Proton donor role is filled by E359. Active-site residues include H390 and K518.

It belongs to the GPI family.

The protein localises to the cytoplasm. It catalyses the reaction alpha-D-glucose 6-phosphate = beta-D-fructose 6-phosphate. It participates in carbohydrate biosynthesis; gluconeogenesis. Its pathway is carbohydrate degradation; glycolysis; D-glyceraldehyde 3-phosphate and glycerone phosphate from D-glucose: step 2/4. Catalyzes the reversible isomerization of glucose-6-phosphate to fructose-6-phosphate. This Stutzerimonas stutzeri (strain A1501) (Pseudomonas stutzeri) protein is Glucose-6-phosphate isomerase.